The sequence spans 273 residues: Putative phosphoenolpyruvate synthase regulatory protein (273 aa).

153–160 (GVSRSGKT) provides a ligand contact to ADP.

It belongs to the pyruvate, phosphate/water dikinase regulatory protein family. PSRP subfamily.

It carries out the reaction [pyruvate, water dikinase] + ADP = [pyruvate, water dikinase]-phosphate + AMP + H(+). It catalyses the reaction [pyruvate, water dikinase]-phosphate + phosphate + H(+) = [pyruvate, water dikinase] + diphosphate. Its function is as follows. Bifunctional serine/threonine kinase and phosphorylase involved in the regulation of the phosphoenolpyruvate synthase (PEPS) by catalyzing its phosphorylation/dephosphorylation. In Paracidovorax citrulli (strain AAC00-1) (Acidovorax citrulli), this protein is Putative phosphoenolpyruvate synthase regulatory protein.